Reading from the N-terminus, the 406-residue chain is Zinc finger protein 793 (406 aa).

A KRAB domain is found at 8-79; the sequence is VSFKDVVVGF…EAACPGCHCW (72 aa). 6 consecutive C2H2-type zinc fingers follow at residues 227–249, 255–277, 283–305, 311–333, 339–361, and 367–389; these read HVCSECGKAFCYKSEFIRHQRSH, YGCTDCGKAFSHKSTLIKHQRIH, FECFFCGKAFTQKSHRTEHQRTH, FVCSECGKSFGEKSYLNVHRKMH, YRCRECGKSFSQKSCLNKHWRTH, and YGCNECGKAFYQKPNLSRHQKIH.

The protein belongs to the krueppel C2H2-type zinc-finger protein family.

Its subcellular location is the nucleus. In terms of biological role, may be involved in transcriptional regulation. In Homo sapiens (Human), this protein is Zinc finger protein 793 (ZNF793).